Reading from the N-terminus, the 152-residue chain is Ribosome maturation factor RimP (152 aa).

The protein belongs to the RimP family.

Its subcellular location is the cytoplasm. In terms of biological role, required for maturation of 30S ribosomal subunits. The sequence is that of Ribosome maturation factor RimP from Burkholderia multivorans (strain ATCC 17616 / 249).